We begin with the raw amino-acid sequence, 496 residues long: Cytochrome P450 71D178 (496 aa).

Residues 1 to 21 (MDISISWVVIILLVLSYLILM) traverse the membrane as a helical; Signal-anchor for type II membrane protein segment. A heme-binding site is contributed by C435.

This sequence belongs to the cytochrome P450 family. Requires heme as cofactor. In terms of tissue distribution, expressed in flowers, leaves and stems, especially in glandular trichomes.

The protein localises to the membrane. It carries out the reaction (4S)-limonene + reduced [NADPH--hemoprotein reductase] + O2 = (1S,5R)-carveol + oxidized [NADPH--hemoprotein reductase] + H2O + H(+). The catalysed reaction is gamma-terpinene + 2 reduced [NADPH--hemoprotein reductase] + 2 O2 = carvacrol + 2 oxidized [NADPH--hemoprotein reductase] + 3 H2O + 2 H(+). It catalyses the reaction gamma-terpinene + 2 reduced [NADPH--hemoprotein reductase] + 2 O2 = thymol + 2 oxidized [NADPH--hemoprotein reductase] + 3 H2O + 2 H(+). The enzyme catalyses (4R)-limonene + reduced [NADPH--hemoprotein reductase] + O2 = (1R,6S)-isopiperitenol + oxidized [NADPH--hemoprotein reductase] + H2O + H(+). It participates in secondary metabolite biosynthesis; terpenoid biosynthesis. Its function is as follows. Involved in the biosynthesis of phenolic monoterpenes natural products thymol and carvacrol which have a broad range of biological activities acting as antimicrobial compounds, insecticides, antioxidants and pharmaceutical agents. Catalyzes the C2- and C3-hydroxylation of gamma-terpinene to produce carvacrol and thymol, respectively. Also mediates the C6-hydroxylation of (4S)-limonene to form carveol and the C3-hydroxylation of (4R)-limonene to generate (+)-trans-isopiperitenol. The protein is Cytochrome P450 71D178 of Origanum vulgare (Wild marjoram).